The following is a 403-amino-acid chain: Serine/threonine transporter SstT (403 aa).

Transmembrane regions (helical) follow at residues 14-34 (VTQIVIGLLAGIALALLAPAI), 44-64 (VFVSALKAVAPVLVFILVMAS), 79-99 (ILWLYLLGTFAAAVVAVVASM), 138-158 (ALLNANFIGVLTWAIGLGVAL), 175-195 (GVTLIVRVVIRFAPLGIFGLV), 214-234 (LAVLIGCMLFVALVMNPLIVF), 295-315 (MAGAAITITVLTLAAVHTLGI), 327-347 (VVAAVCACGASGVAGGSLLLI), and 353-373 (LFGIPSEIAMQVVAVGFIIGV).

The protein belongs to the dicarboxylate/amino acid:cation symporter (DAACS) (TC 2.A.23) family.

It localises to the cell inner membrane. The catalysed reaction is L-serine(in) + Na(+)(in) = L-serine(out) + Na(+)(out). The enzyme catalyses L-threonine(in) + Na(+)(in) = L-threonine(out) + Na(+)(out). Involved in the import of serine and threonine into the cell, with the concomitant import of sodium (symport system). The sequence is that of Serine/threonine transporter SstT from Pseudomonas putida (strain ATCC 700007 / DSM 6899 / JCM 31910 / BCRC 17059 / LMG 24140 / F1).